The sequence spans 156 residues: Transcriptional repressor NrdR (156 aa).

A zinc finger lies at 3-34 (CPKCNSTHSRVVDSRHADEVNAIRRRRECEEC). Residues 49 to 139 (LIVVKKDGTR…VYKEFKDVDQ (91 aa)) form the ATP-cone domain.

It belongs to the NrdR family. Zn(2+) is required as a cofactor.

Its function is as follows. Negatively regulates transcription of bacterial ribonucleotide reductase nrd genes and operons by binding to NrdR-boxes. In Staphylococcus saprophyticus subsp. saprophyticus (strain ATCC 15305 / DSM 20229 / NCIMB 8711 / NCTC 7292 / S-41), this protein is Transcriptional repressor NrdR.